We begin with the raw amino-acid sequence, 343 residues long: Anthranilate phosphoribosyltransferase (343 aa).

5-phospho-alpha-D-ribose 1-diphosphate is bound by residues G81, 84–85 (GD), 91–94 (NVST), 109–117 (KHGNRSVSS), and S121. G81 is an anthranilate binding site. Residue S93 coordinates Mg(2+). Residue N112 coordinates anthranilate. R167 contacts anthranilate. 2 residues coordinate Mg(2+): D226 and E227.

Belongs to the anthranilate phosphoribosyltransferase family. Homodimer. It depends on Mg(2+) as a cofactor.

The catalysed reaction is N-(5-phospho-beta-D-ribosyl)anthranilate + diphosphate = 5-phospho-alpha-D-ribose 1-diphosphate + anthranilate. The protein operates within amino-acid biosynthesis; L-tryptophan biosynthesis; L-tryptophan from chorismate: step 2/5. Its function is as follows. Catalyzes the transfer of the phosphoribosyl group of 5-phosphorylribose-1-pyrophosphate (PRPP) to anthranilate to yield N-(5'-phosphoribosyl)-anthranilate (PRA). In Chromohalobacter salexigens (strain ATCC BAA-138 / DSM 3043 / CIP 106854 / NCIMB 13768 / 1H11), this protein is Anthranilate phosphoribosyltransferase.